Consider the following 392-residue polypeptide: Protein NolC (392 aa).

Residues 2–71 (KRDLYETLGV…RAAYDRYGHA (70 aa)) enclose the J domain. Disordered regions lie at residues 103–142 (RRDD…QDGA) and 157–244 (LGRE…TGLR). Residues 157–170 (LGREAGHQPEDLRH) show a composition bias toward basic and acidic residues. Low complexity predominate over residues 171-185 (LPGLRPYPRRPGLLL). Residues 186 to 203 (DRTHLPDLRRSRSDDHRS) show a composition bias toward basic and acidic residues. Residues 227–241 (HRGRHAYPPLRRGRT) show a composition bias toward basic residues.

This Rhizobium fredii (Sinorhizobium fredii) protein is Protein NolC (nolC).